Reading from the N-terminus, the 315-residue chain is GTP cyclohydrolase MptA (315 aa).

This sequence belongs to the GTP cyclohydrolase IV family. In terms of assembly, homodimer. Requires Fe(2+) as cofactor.

It carries out the reaction GTP + H2O = 7,8-dihydroneopterin 2',3'-cyclic phosphate + formate + diphosphate + H(+). It functions in the pathway cofactor biosynthesis; 5,6,7,8-tetrahydromethanopterin biosynthesis. Functionally, converts GTP to 7,8-dihydro-D-neopterin 2',3'-cyclic phosphate, the first intermediate in the biosynthesis of coenzyme methanopterin. This is GTP cyclohydrolase MptA from Methanococcus maripaludis (strain C5 / ATCC BAA-1333).